Reading from the N-terminus, the 688-residue chain is UvrABC system protein B (688 aa).

A Helicase ATP-binding domain is found at 31 to 188; the sequence is GRVNAGEPDV…RKFVSMQYQR (158 aa). 44-51 lines the ATP pocket; sequence GATGTGKS. The short motif at 97 to 120 is the Beta-hairpin element; it reads YYDYYQPEAYVPQTDTFIEKDSSV. Residues 434-587 form the Helicase C-terminal domain; the sequence is QIDDLLEQIR…QVAYNTEHGI (154 aa). The tract at residues 607–632 is disordered; it reads GEDTKKMLEGRGGGKRSPTPNLRREG. A UVR domain is found at 642–677; sequence ETIISDLNDQMLQAAGELKFELAARLRDELGDLKRE.

The protein belongs to the UvrB family. As to quaternary structure, forms a heterotetramer with UvrA during the search for lesions. Interacts with UvrC in an incision complex.

The protein resides in the cytoplasm. The UvrABC repair system catalyzes the recognition and processing of DNA lesions. A damage recognition complex composed of 2 UvrA and 2 UvrB subunits scans DNA for abnormalities. Upon binding of the UvrA(2)B(2) complex to a putative damaged site, the DNA wraps around one UvrB monomer. DNA wrap is dependent on ATP binding by UvrB and probably causes local melting of the DNA helix, facilitating insertion of UvrB beta-hairpin between the DNA strands. Then UvrB probes one DNA strand for the presence of a lesion. If a lesion is found the UvrA subunits dissociate and the UvrB-DNA preincision complex is formed. This complex is subsequently bound by UvrC and the second UvrB is released. If no lesion is found, the DNA wraps around the other UvrB subunit that will check the other stand for damage. In Clavibacter michiganensis subsp. michiganensis (strain NCPPB 382), this protein is UvrABC system protein B.